We begin with the raw amino-acid sequence, 223 residues long: uncharacterized protein (223 aa).

A disordered region spans residues threonine 117 to threonine 148.

This is an uncharacterized protein from Homo sapiens (Human).